Here is a 969-residue protein sequence, read N- to C-terminus: RNA polymerase-associated protein RapA (969 aa).

The Helicase ATP-binding domain occupies 164–334 (EVGRRYAPRV…FARLRLLDPD (171 aa)). Residue 177-184 (DEVGLGKT) coordinates ATP. The DEAH box signature appears at 280–283 (DEAH). Residues 492-668 (RVNWLLELLK…GKSDGLESLI (177 aa)) form the Helicase C-terminal domain.

This sequence belongs to the SNF2/RAD54 helicase family. RapA subfamily. Interacts with the RNAP. Has a higher affinity for the core RNAP than for the holoenzyme. Its ATPase activity is stimulated by binding to RNAP.

Transcription regulator that activates transcription by stimulating RNA polymerase (RNAP) recycling in case of stress conditions such as supercoiled DNA or high salt concentrations. Probably acts by releasing the RNAP, when it is trapped or immobilized on tightly supercoiled DNA. Does not activate transcription on linear DNA. Probably not involved in DNA repair. The protein is RNA polymerase-associated protein RapA of Aliivibrio fischeri (strain MJ11) (Vibrio fischeri).